A 339-amino-acid polypeptide reads, in one-letter code: Ketol-acid reductoisomerase (NADP(+)) (339 aa).

Residues 1-182 (MRVYYDRDAD…GGGRAGVIET (182 aa)) form the KARI N-terminal Rossmann domain. Residues 24–27 (YGSQ), Arg-48, Ser-51, Thr-53, and 83–86 (DELQ) contribute to the NADP(+) site. His-108 is a catalytic residue. Gly-134 serves as a coordination point for NADP(+). Residues 183 to 328 (TFKEECETDL…EKLRAMMPWI (146 aa)) form the KARI C-terminal knotted domain. Residues Asp-191, Glu-195, Glu-227, and Glu-231 each coordinate Mg(2+). Position 252 (Ser-252) interacts with substrate.

This sequence belongs to the ketol-acid reductoisomerase family. The cofactor is Mg(2+).

It carries out the reaction (2R)-2,3-dihydroxy-3-methylbutanoate + NADP(+) = (2S)-2-acetolactate + NADPH + H(+). The enzyme catalyses (2R,3R)-2,3-dihydroxy-3-methylpentanoate + NADP(+) = (S)-2-ethyl-2-hydroxy-3-oxobutanoate + NADPH + H(+). Its pathway is amino-acid biosynthesis; L-isoleucine biosynthesis; L-isoleucine from 2-oxobutanoate: step 2/4. It participates in amino-acid biosynthesis; L-valine biosynthesis; L-valine from pyruvate: step 2/4. Involved in the biosynthesis of branched-chain amino acids (BCAA). Catalyzes an alkyl-migration followed by a ketol-acid reduction of (S)-2-acetolactate (S2AL) to yield (R)-2,3-dihydroxy-isovalerate. In the isomerase reaction, S2AL is rearranged via a Mg-dependent methyl migration to produce 3-hydroxy-3-methyl-2-ketobutyrate (HMKB). In the reductase reaction, this 2-ketoacid undergoes a metal-dependent reduction by NADPH to yield (R)-2,3-dihydroxy-isovalerate. This chain is Ketol-acid reductoisomerase (NADP(+)), found in Xanthobacter autotrophicus (strain ATCC BAA-1158 / Py2).